A 101-amino-acid polypeptide reads, in one-letter code: MKPNFSKGLIPAIVIEEGTKDVLMLAYMNEEAYEKTLETKRTWFYSRSRQSLWNKGETSGNVQYVQSLYLDCDQDSIVVNVKQVGPACHTGEKTCFHYQII.

Residue aspartate 71 coordinates Mg(2+). Zn(2+) is bound at residue cysteine 72. Residues aspartate 73 and aspartate 75 each contribute to the Mg(2+) site. The Zn(2+) site is built by cysteine 88 and cysteine 95.

Belongs to the PRA-CH family. Homodimer. Requires Mg(2+) as cofactor. It depends on Zn(2+) as a cofactor.

The protein resides in the cytoplasm. It carries out the reaction 1-(5-phospho-beta-D-ribosyl)-5'-AMP + H2O = 1-(5-phospho-beta-D-ribosyl)-5-[(5-phospho-beta-D-ribosylamino)methylideneamino]imidazole-4-carboxamide. It functions in the pathway amino-acid biosynthesis; L-histidine biosynthesis; L-histidine from 5-phospho-alpha-D-ribose 1-diphosphate: step 3/9. Its function is as follows. Catalyzes the hydrolysis of the adenine ring of phosphoribosyl-AMP. In Bacillus cereus (strain B4264), this protein is Phosphoribosyl-AMP cyclohydrolase.